The primary structure comprises 273 residues: Galactose-binding lectin (273 aa).

The N-terminal stretch at M1 to S23 is a signal peptide. Residues E144 and D146 each coordinate Mn(2+). D146, Y148, N150, and D155 together coordinate Ca(2+). The Mn(2+) site is built by D155 and H160.

This sequence belongs to the leguminous lectin family. In terms of assembly, homotetramer.

In terms of biological role, D-galactose specific lectin. This chain is Galactose-binding lectin, found in Arachis hypogaea (Peanut).